The primary structure comprises 366 residues: Di-N-acetylchitobiase (366 aa).

The signal sequence occupies residues 1–22 (MALCGLPEFTLLLLPLLARLSA). One can recognise a GH18 domain in the interval 23–366 (GDCPCSEAAL…EMWGALKPRL (344 aa)). The active-site Proton donor is glutamate 127. N-linked (GlcNAc...) asparagine glycosylation is found at asparagine 131, asparagine 177, asparagine 212, asparagine 246, and asparagine 283.

This sequence belongs to the glycosyl hydrolase 18 family.

Its subcellular location is the lysosome. Its function is as follows. Involved in the degradation of asparagine-linked glycoproteins. Hydrolyze of N-acetyl-beta-D-glucosamine (1-4)N-acetylglucosamine chitobiose core from the reducing end of the bond, it requires prior cleavage by glycosylasparaginase. This chain is Di-N-acetylchitobiase (Ctbs), found in Mus musculus (Mouse).